The primary structure comprises 457 residues: Putative transposase y4bF (457 aa).

Positions 128-313 (TFHQPRLRRE…RPLNLAPDRL (186 aa)) constitute an Integrase catalytic domain. The interval 406–440 (QDERPAPKVRTNSEKNGYTPRGRKPGKRTDFMNDP) is disordered.

The sequence is that of Putative transposase y4bF from Sinorhizobium fredii (strain NBRC 101917 / NGR234).